The chain runs to 602 residues: Elongation factor 4 (602 aa).

One can recognise a tr-type G domain in the interval 7 to 188 (ENIRNFSIIA…AIIELIPPPK (182 aa)). GTP-binding positions include 19 to 24 (DHGKST) and 135 to 138 (NKID).

The protein belongs to the TRAFAC class translation factor GTPase superfamily. Classic translation factor GTPase family. LepA subfamily.

The protein resides in the cell inner membrane. It catalyses the reaction GTP + H2O = GDP + phosphate + H(+). In terms of biological role, required for accurate and efficient protein synthesis under certain stress conditions. May act as a fidelity factor of the translation reaction, by catalyzing a one-codon backward translocation of tRNAs on improperly translocated ribosomes. Back-translocation proceeds from a post-translocation (POST) complex to a pre-translocation (PRE) complex, thus giving elongation factor G a second chance to translocate the tRNAs correctly. Binds to ribosomes in a GTP-dependent manner. The chain is Elongation factor 4 from Chlamydia caviae (strain ATCC VR-813 / DSM 19441 / 03DC25 / GPIC) (Chlamydophila caviae).